The following is an 864-amino-acid chain: Sine oculis-binding protein homolog (864 aa).

Residues 1–14 (MAEMEKEGRPPENK) show a composition bias toward basic and acidic residues. The disordered stretch occupies residues 1 to 25 (MAEMEKEGRPPENKRSRKPAHPVKR). FCS-type zinc fingers lie at residues 142 to 180 (DEVS…KCFA) and 216 to 256 (FKNN…KCLN). 3 disordered regions span residues 304–360 (LTDA…ETPS), 413–484 (RGPP…PGAP), and 550–616 (KPPN…RGRG). 2 stretches are compositionally biased toward low complexity: residues 314-335 (PVAA…VSPS) and 417-433 (HHAS…MLPG). Positions 460-484 (IHPPSTPTMPGNPPGLLPPPPPGAP) are enriched in pro residues. Low complexity-rich tracts occupy residues 565–582 (SAPG…GRSL) and 590–603 (GSSK…GSSG). The short motif at 618 to 622 (VVDLT) is the SUMO interaction motif 1 (SIM); mediates the binding to polysumoylated substrates element. S627 carries the post-translational modification Phosphoserine. The SUMO interaction motif 2 (SIM); mediates the binding to polysumoylated substrates signature appears at 648-652 (VIDLT). A Glycyl lysine isopeptide (Lys-Gly) (interchain with G-Cter in SUMO2) cross-link involves residue K672. S694 bears the Phosphoserine mark. The segment at 725-750 (APAEAKGAEPPPEQPPPPAPPKKLLS) is disordered. Residues 733 to 745 (EPPPEQPPPPAPP) are compositionally biased toward pro residues.

Belongs to the SOBP family. In terms of assembly, interacts (via SIM domains) with SUMO1 and SUMO2.

In terms of biological role, implicated in development of the cochlea. The polypeptide is Sine oculis-binding protein homolog (Rattus norvegicus (Rat)).